We begin with the raw amino-acid sequence, 291 residues long: Beta-lactamase CTX-M-97 (291 aa).

The N-terminal stretch at 1-28 (MMTQSIGRSMLTVMATLPLLFSSATLHA) is a signal peptide. S73 functions as the Acyl-ester intermediate in the catalytic mechanism. 237 to 239 (KTG) is a binding site for substrate.

This sequence belongs to the class-A beta-lactamase family.

The enzyme catalyses a beta-lactam + H2O = a substituted beta-amino acid. Functionally, is probably capable of hydrolyzing cephalosporins such as ceftriaxone and ceftazidime, thus conferring resistance to these antibiotics. This is Beta-lactamase CTX-M-97 (bla) from Escherichia coli.